Here is a 176-residue protein sequence, read N- to C-terminus: uncharacterized protein (176 aa).

The segment covering 1 to 12 (MRLPYSSSKPIP) has biased composition (polar residues). Disordered stretches follow at residues 1–88 (MRLP…PQQQ) and 109–132 (VNNS…PSSS). A compositionally biased stretch (low complexity) spans 13–24 (TNNNNNNNNTNN). The span at 37–46 (SYYQTQENNK) shows a compositional bias: polar residues. The segment covering 47-88 (PQQSQQHPLLQHQQQQQQQQQQQQQQQQQQQQQQQQQQPQQQ) has biased composition (low complexity).

This is an uncharacterized protein from Dictyostelium discoideum (Social amoeba).